The following is a 249-amino-acid chain: 4-hydroxy-tetrahydrodipicolinate reductase (249 aa).

Residues 77–79 (ATT) and 101–104 (SYNT) contribute to the NAD(+) site. Residue His133 is the Proton donor/acceptor of the active site. His134 contacts (S)-2,3,4,5-tetrahydrodipicolinate. The active-site Proton donor is Lys137. Position 143-144 (143-144 (GT)) interacts with (S)-2,3,4,5-tetrahydrodipicolinate.

This sequence belongs to the DapB family.

The protein resides in the cytoplasm. It carries out the reaction (S)-2,3,4,5-tetrahydrodipicolinate + NAD(+) + H2O = (2S,4S)-4-hydroxy-2,3,4,5-tetrahydrodipicolinate + NADH + H(+). The catalysed reaction is (S)-2,3,4,5-tetrahydrodipicolinate + NADP(+) + H2O = (2S,4S)-4-hydroxy-2,3,4,5-tetrahydrodipicolinate + NADPH + H(+). The protein operates within amino-acid biosynthesis; L-lysine biosynthesis via DAP pathway; (S)-tetrahydrodipicolinate from L-aspartate: step 4/4. Its function is as follows. Catalyzes the conversion of 4-hydroxy-tetrahydrodipicolinate (HTPA) to tetrahydrodipicolinate. In Exiguobacterium sp. (strain ATCC BAA-1283 / AT1b), this protein is 4-hydroxy-tetrahydrodipicolinate reductase.